A 74-amino-acid chain; its full sequence is uncharacterized protein (74 aa).

This sequence to U.parvum UU416.

This is an uncharacterized protein from Mycoplasma pneumoniae (strain ATCC 29342 / M129 / Subtype 1) (Mycoplasmoides pneumoniae).